We begin with the raw amino-acid sequence, 704 residues long: Transcription factor HNF-4 homolog (704 aa).

Residues 93–133 (SAGGGSASSGSNNNNSMFSPNNNLSGSGSGTNSSQQQLQQQ) form a disordered region. Over residues 100-133 (SSGSNNNNSMFSPNNNLSGSGSGTNSSQQQLQQQ) the composition is skewed to low complexity. The segment at residues 139-214 (PTVCAICGDR…AGMKKEAVQN (76 aa)) is a DNA-binding region (nuclear receptor). 2 NR C4-type zinc fingers span residues 142 to 162 (CAICGDRATGKHYGASSCDGC) and 178 to 197 (CRFARNCVVDKDKRNQCRYC). Positions 232–470 (GNGLSVISLV…SLLQEMLLGG (239 aa)) constitute an NR LBD domain. 3 disordered regions span residues 474–520 (DNPL…GSHS), 563–624 (PASV…QRMH), and 684–704 (PAGYGTEPCRMTLKQEPETGY). Positions 487–512 (DYQSPTHTGNMEGGNQVNSSLDSLAT) are enriched in polar residues. Positions 563–574 (PASVAPASISPP) are enriched in low complexity. Residues 608 to 620 (GSRSGPLPTQHSP) are compositionally biased toward polar residues.

It belongs to the nuclear hormone receptor family. NR2 subfamily. As to quaternary structure, homodimer. In terms of tissue distribution, in third instar larvae, expressed at high levels in midgut and attached gastric caeca, fat body, Malpighian tubules and oenocytes, and at lower levels in proventriculus, salivary glands, epidermis, brain and ring gland. Not detected in imaginal disks and the median neurosecretory cells that produce insulin-like peptides (at protein level). In developing embryos, expressed in mid-gut, fat bodies and the distal region of Malpighian tubules.

It is found in the nucleus. Functionally, transcriptionally controlled transcription factor. Important for the differentiation of various specialized cell types that arise from both endoderm and mesoderm. May have a role in early gut formation. Plays an essential role in lipid catabolism, regulating lipid mobilization and beta-oxidation in response to nutrient deprivation. This chain is Transcription factor HNF-4 homolog (Hnf4), found in Drosophila melanogaster (Fruit fly).